The sequence spans 170 residues: E1B protein, small T-antigen (170 aa).

Positions 137–170 (PAQPPHGLDPVREEEEEEEEEENLRAGLDPQTEL) are disordered. The span at 148–158 (REEEEEEEEEE) shows a compositional bias: acidic residues.

This sequence belongs to the adenoviridae E1B 19 kDa protein family.

The protein resides in the host cell membrane. It is found in the host nucleus envelope. It localises to the host nucleus lamina. In terms of biological role, putative adenovirus Bcl-2 homolog that inhibits apoptosis induced by TNF or FAS pathways, as well as p53-mediated apoptosis. Without E1B 19K function, virus production is compromised because of premature death of host cell. Interacts with Bax protein in cell lysates. The protein is E1B protein, small T-antigen of Homo sapiens (Human).